A 251-amino-acid polypeptide reads, in one-letter code: Diphthine synthase (251 aa).

Residues L9, D85, V88, 113–114 (SI), L165, A202, and H227 each bind S-adenosyl-L-methionine.

The protein belongs to the diphthine synthase family. In terms of assembly, homodimer.

It catalyses the reaction 2-[(3S)-amino-3-carboxypropyl]-L-histidyl-[translation elongation factor 2] + 3 S-adenosyl-L-methionine = diphthine-[translation elongation factor 2] + 3 S-adenosyl-L-homocysteine + 3 H(+). The protein operates within protein modification; peptidyl-diphthamide biosynthesis. Its function is as follows. S-adenosyl-L-methionine-dependent methyltransferase that catalyzes the trimethylation of the amino group of the modified target histidine residue in translation elongation factor 2 (EF-2), to form an intermediate called diphthine. The three successive methylation reactions represent the second step of diphthamide biosynthesis. In Methanosphaerula palustris (strain ATCC BAA-1556 / DSM 19958 / E1-9c), this protein is Diphthine synthase.